The chain runs to 373 residues: 3 beta-hydroxysteroid dehydrogenase/Delta 5--&gt;4-isomerase type 1 (373 aa).

Residues 10-15, Tyr-155, and Lys-159 each bind NADP(+); that span reads GAGGFL. Lys-159 acts as the Proton donor in catalysis. The chain crosses the membrane as a helical span at residues 288–308; sequence VALLYWLGFLLELVSFLLRPV.

Belongs to the 3-beta-HSD family. In terms of tissue distribution, high levels in adrenal gland, kidney and male liver. Low levels in female liver.

It is found in the endoplasmic reticulum membrane. The protein resides in the mitochondrion membrane. The catalysed reaction is a 3beta-hydroxy-Delta(5)-steroid + NAD(+) = a 3-oxo-Delta(5)-steroid + NADH + H(+). It catalyses the reaction pregnenolone + NAD(+) = pregn-5-ene-3,20-dione + NADH + H(+). The enzyme catalyses 3beta-hydroxyandrost-5-en-17-one + NAD(+) = androst-5-ene-3,17-dione + NADH + H(+). It carries out the reaction androst-5-en-3beta,17beta-diol + NAD(+) = 17beta-hydroxy-androst-5-en-3-one + NADH + H(+). The catalysed reaction is a 3beta-hydroxysteroid + NADP(+) = a 3-oxosteroid + NADPH + H(+). It catalyses the reaction 5alpha-androstane-3beta,17beta-diol + NADP(+) = 17beta-hydroxy-5alpha-androstan-3-one + NADPH + H(+). The enzyme catalyses 3beta-hydroxy-5alpha-androstan-17-one + NADP(+) = 5alpha-androstan-3,17-dione + NADPH + H(+). It carries out the reaction a 3-oxo-Delta(5)-steroid = a 3-oxo-Delta(4)-steroid. The catalysed reaction is pregn-5-ene-3,20-dione = progesterone. It catalyses the reaction androst-5-ene-3,17-dione = androst-4-ene-3,17-dione. The enzyme catalyses 17beta-hydroxy-androst-5-en-3-one = testosterone. It carries out the reaction 5alpha-androstane-3beta,17beta-diol + NAD(+) = 17beta-hydroxy-5alpha-androstan-3-one + NADH + H(+). It participates in steroid hormone biosynthesis. It functions in the pathway steroid metabolism. In terms of biological role, a bifunctional enzyme responsible for the oxidation and isomerization of 3beta-hydroxy-Delta(5)-steroid precursors to 3-oxo-Delta(4)-steroids, an essential step in steroid hormone biosynthesis. Specifically catalyzes the conversion of pregnenolone to progesterone, 17alpha-hydroxypregnenolone to 17alpha-hydroxyprogesterone, dehydroepiandrosterone (DHEA) to 4-androstenedione, and androstenediol to testosterone. Additionally, catalyzes the interconversion between 3beta-hydroxy and 3-oxo-5alpha-androstane steroids controlling the bioavalability of the active forms. Specifically converts dihydrotestosterone to its inactive form 5alpha-androstanediol, that does not bind androgen receptor/AR. Also converts androstanedione, a precursor of testosterone and estrone, to epiandrosterone. Expected to use NAD(+) as preferred electron donor for the 3-beta-hydroxy-steroid dehydrogenase activity and NADPH for the 3-ketosteroid reductase activity. In Mesocricetus auratus (Golden hamster), this protein is 3 beta-hydroxysteroid dehydrogenase/Delta 5--&gt;4-isomerase type 1 (HSD3B1).